Consider the following 217-residue polypeptide: Protein GrpE (217 aa).

Acidic residues-rich tracts occupy residues 1–28, 136–152, and 204–217; these read MSDD…EGDD, DILD…DPGT, and SEAE…DGDE. Disordered regions lie at residues 1–44, 135–157, and 193–217; these read MSDD…NDPA, DDIL…TDPK, and QVTV…DGDE.

Belongs to the GrpE family. In terms of assembly, homodimer.

Its subcellular location is the cytoplasm. In terms of biological role, participates actively in the response to hyperosmotic and heat shock by preventing the aggregation of stress-denatured proteins, in association with DnaK and GrpE. It is the nucleotide exchange factor for DnaK and may function as a thermosensor. Unfolded proteins bind initially to DnaJ; upon interaction with the DnaJ-bound protein, DnaK hydrolyzes its bound ATP, resulting in the formation of a stable complex. GrpE releases ADP from DnaK; ATP binding to DnaK triggers the release of the substrate protein, thus completing the reaction cycle. Several rounds of ATP-dependent interactions between DnaJ, DnaK and GrpE are required for fully efficient folding. The protein is Protein GrpE of Natronomonas pharaonis (strain ATCC 35678 / DSM 2160 / CIP 103997 / JCM 8858 / NBRC 14720 / NCIMB 2260 / Gabara) (Halobacterium pharaonis).